A 597-amino-acid chain; its full sequence is DNA mismatch repair protein MutL (597 aa).

The protein belongs to the DNA mismatch repair MutL/HexB family.

This protein is involved in the repair of mismatches in DNA. It is required for dam-dependent methyl-directed DNA mismatch repair. May act as a 'molecular matchmaker', a protein that promotes the formation of a stable complex between two or more DNA-binding proteins in an ATP-dependent manner without itself being part of a final effector complex. The protein is DNA mismatch repair protein MutL of Rhodopseudomonas palustris (strain HaA2).